The primary structure comprises 664 residues: Macoilin (664 aa).

4 consecutive transmembrane segments (helical) span residues 28–48 (TFLY…DFVL), 75–95 (AFSV…LLFI), 120–140 (VCLP…AIRF), and 154–174 (FAAH…KSYV). The span at 253–265 (REKGKEKDKDAKK) shows a compositional bias: basic and acidic residues. The interval 253 to 274 (REKGKEKDKDAKKHNLGINNNN) is disordered. A Phosphoserine modification is found at serine 305. The span at 320–348 (KNYKNASGVVNSSPRSHSATNGSIPSSSS) shows a compositional bias: polar residues. The segment at 320–375 (KNYKNASGVVNSSPRSHSATNGSIPSSSSKNEKKQKCTSKSPSTHKDLMENCIPNN) is disordered. Asparagine 324 carries an N-linked (GlcNAc...) asparagine glycan. A Phosphoserine modification is found at serine 332. 2 N-linked (GlcNAc...) asparagine glycosylation sites follow: asparagine 340 and asparagine 452. The segment at 630–664 (TSPLSPVSPHYSSKFVETSPSGLDPNASVYQPLKK) is disordered. Phosphoserine occurs at positions 631 and 634. Asparagine 655 carries an N-linked (GlcNAc...) asparagine glycan.

Belongs to the macoilin family.

It localises to the rough endoplasmic reticulum membrane. The protein resides in the nucleus membrane. Its function is as follows. Plays a role in the regulation of neuronal activity. This Macaca mulatta (Rhesus macaque) protein is Macoilin (MACO1).